Here is a 469-residue protein sequence, read N- to C-terminus: RuvB-like helicase 2 (469 aa).

76–83 provides a ligand contact to ATP; it reads GPPSTGKT.

It belongs to the RuvB family. In terms of assembly, may form heterododecamers with RVB1. Component of the SWR1 chromatin remodeling complex, the INO80 chromatin remodeling complex, and of the R2TP complex.

The protein resides in the nucleus. The enzyme catalyses ATP + H2O = ADP + phosphate + H(+). DNA helicase which participates in several chromatin remodeling complexes, including the SWR1 and the INO80 complexes. The SWR1 complex mediates the ATP-dependent exchange of histone H2A for the H2A variant HZT1 leading to transcriptional regulation of selected genes by chromatin remodeling. The INO80 complex remodels chromatin by shifting nucleosomes and is involved in DNA repair. Also involved in pre-rRNA processing. This chain is RuvB-like helicase 2 (rvb2), found in Aspergillus fumigatus (strain ATCC MYA-4609 / CBS 101355 / FGSC A1100 / Af293) (Neosartorya fumigata).